A 111-amino-acid polypeptide reads, in one-letter code: ATP-dependent Clp protease adapter protein ClpS (111 aa).

This sequence belongs to the ClpS family. Binds to the N-terminal domain of the chaperone ClpA.

Functionally, involved in the modulation of the specificity of the ClpAP-mediated ATP-dependent protein degradation. This chain is ATP-dependent Clp protease adapter protein ClpS, found in Corynebacterium aurimucosum (strain ATCC 700975 / DSM 44827 / CIP 107346 / CN-1) (Corynebacterium nigricans).